The sequence spans 418 residues: Tryptophan synthase beta chain (418 aa).

Over residues 1–18 the composition is skewed to polar residues; sequence MTSTLPKASQPDPSSLQP. The interval 1–28 is disordered; sequence MTSTLPKASQPDPSSLQPSARPGAHGRF. N6-(pyridoxal phosphate)lysine is present on Lys111.

This sequence belongs to the TrpB family. Tetramer of two alpha and two beta chains. Pyridoxal 5'-phosphate is required as a cofactor.

The enzyme catalyses (1S,2R)-1-C-(indol-3-yl)glycerol 3-phosphate + L-serine = D-glyceraldehyde 3-phosphate + L-tryptophan + H2O. Its pathway is amino-acid biosynthesis; L-tryptophan biosynthesis; L-tryptophan from chorismate: step 5/5. Its function is as follows. The beta subunit is responsible for the synthesis of L-tryptophan from indole and L-serine. The protein is Tryptophan synthase beta chain of Synechococcus sp. (strain CC9902).